The chain runs to 291 residues: Small ribosomal subunit protein uS2 (291 aa).

Residues 270-291 form a disordered region; the sequence is NINEEANTEFEQALSDADEDKN.

The protein belongs to the universal ribosomal protein uS2 family.

This is Small ribosomal subunit protein uS2 from Rickettsia bellii (strain OSU 85-389).